A 620-amino-acid polypeptide reads, in one-letter code: Toxin coregulated pilus biosynthesis protein I (620 aa).

One can recognise a Methyl-accepting transducer domain in the interval 344 to 580 (TMNDLSIKQT…DVAKQMEDIR (237 aa)).

This sequence belongs to the methyl-accepting chemotaxis (MCP) protein family.

The protein localises to the cell inner membrane. May function as an environmental regulator of TCP biogenesis. Negatively regulates the synthesis of the major pilin subunit of TCP (TcpA). The sequence is that of Toxin coregulated pilus biosynthesis protein I (tcpI) from Vibrio cholerae serotype O1 (strain ATCC 39315 / El Tor Inaba N16961).